The primary structure comprises 193 residues: dCTP deaminase, dUMP-forming (193 aa).

Residues 101-106 (KSSLGR), Asp-119, 127-129 (TLE), Gln-148, Tyr-162, and Gln-174 contribute to the dCTP site. The Proton donor/acceptor role is filled by Glu-129. Residues 162 to 184 (YGSKGTGSHYQGQRGPTPSRSYE) form a disordered region. Residues 167–183 (TGSHYQGQRGPTPSRSY) show a composition bias toward polar residues.

This sequence belongs to the dCTP deaminase family. Homotrimer.

The catalysed reaction is dCTP + 2 H2O = dUMP + NH4(+) + diphosphate. It functions in the pathway pyrimidine metabolism; dUMP biosynthesis; dUMP from dCTP: step 1/1. Functionally, bifunctional enzyme that catalyzes both the deamination of dCTP to dUTP and the hydrolysis of dUTP to dUMP without releasing the toxic dUTP intermediate. This chain is dCTP deaminase, dUMP-forming, found in Bifidobacterium longum (strain DJO10A).